Reading from the N-terminus, the 410-residue chain is MLSAISKVSTLKSCTRYLTKCNYHASAKLLAVKTFSMPAMSPTMEKGGIVSWKYKVGEPFSAGDVILEVETDKSQIDVEALDDGKLAKILKDEGSKDVDVGEPIAYIADVDDDLATIKLPQEANTANAKSIEIKKPSADSTEATQQHLKKATVTPIKTVDGSQANLEQTLLPSVSLLLAENNISKQKALKEIAPSGSNGRLLKGDVLAYLGKIPQDSVNKVTEFIKKNERLDLSNIKPIQLKPKIAEQAQTKAADKPKITPVEFEEQLVFHAPASIPFDKLSESLNSFMKEAYQFSHGTPLMDTNSKYFDPIFEDLVTLSPREPRFKFSYDLMQIPKANNMQDTYGQEDIFDLLTGSDATASSVRPVEKNLPEKNEYILALNVSVNNKKFNDAEAKAKRFLDYVRELESF.

A mitochondrion-targeting transit peptide spans 1 to 30; that stretch reads MLSAISKVSTLKSCTRYLTKCNYHASAKLL. The region spanning 32-108 is the Lipoyl-binding domain; sequence VKTFSMPAMS…DVGEPIAYIA (77 aa). An N6-lipoyllysine modification is found at lysine 73. Positions 169 to 210 constitute a Peripheral subunit-binding (PSBD) domain; that stretch reads TLLPSVSLLLAENNISKQKALKEIAPSGSNGRLLKGDVLAYL.

It belongs to the 2-oxoacid dehydrogenase family. In terms of assembly, eukaryotic pyruvate dehydrogenase (PDH) complexes are organized as a core consisting of the oligomeric dihydrolipoamide acetyl-transferase (E2), around which are arranged multiple copies of pyruvate dehydrogenase (E1), dihydrolipoamide dehydrogenase (E3) and protein X (E3BP) bound by non-covalent bonds.

The protein localises to the mitochondrion matrix. Its function is as follows. Required for anchoring dihydrolipoamide dehydrogenase (E3) to the dihydrolipoamide transacetylase (E2) core of the pyruvate dehydrogenase complexes of eukaryotes. This specific binding is essential for a functional PDH complex. This Saccharomyces cerevisiae (strain ATCC 204508 / S288c) (Baker's yeast) protein is Pyruvate dehydrogenase complex protein X component, mitochondrial (PDX1).